A 704-amino-acid polypeptide reads, in one-letter code: MARVTPIVRYRNIGISAHIDAGKTTTTERILFYTGVNHKIGEVHTGSATMDWMEQEQERGITITSAATTCFWSGMANQFDSHRINIIDTPGHVDFTIEVERSMRILDGVVMVYCAVGGVQPQSETVWRQANKYKVPRIAFINKMDRVGADYLRVVEQLKTRLFANPVPIQLAVGSEDKFTGIIDLIKMKAIHWNELDQGVTFSYSEIPDNLTDLSGIWRKHLIESAVEVSEELMDKYLSNSDQLTEQEIKQALRQRVLSNEIVLVTCGSAFKNKGVQAMLDAVVEYLPSPSDVTSITGVLKDGSTRVNRHANDHEPFSALAFKIATDPFVGNLTFFRVYSGVVSSGDSVLNPIKEKRERFGRIVQMHANKREEIKSVHAGDIAAAIGLKDVDTGDTLCAPSSPIILERMEFPEPVISVMVEAKTKSDQEKMGFALNRLAQEDPSFRVWIDKDSGQTIIAGMGELHLEILVERMRREFNVEANVGKPQVAYRETIRTSVKQEGKFIRQSGGRGQFGHVWLRIEPMPAREEGYKFLNEIVGGAVPKEYIPAVDKGVREQISNGILAGYPIVDVCVTIFDGSYHEVDSSEIAFKIAGSIAFKEGFMKAHPVLLEPIMNVEIETPEDYMGDVIADLNRRRGIISGLENSTISGKIICAQVPLSEMFGYATGLRSQTQGRASYSMEFLKYNEVPNSIAQIIINSRQIKQ.

Positions 8–291 constitute a tr-type G domain; sequence VRYRNIGISA…AVVEYLPSPS (284 aa). GTP-binding positions include 17–24, 88–92, and 142–145; these read AHIDAGKT, DTPGH, and NKMD.

Belongs to the TRAFAC class translation factor GTPase superfamily. Classic translation factor GTPase family. EF-G/EF-2 subfamily.

Its subcellular location is the cytoplasm. In terms of biological role, catalyzes the GTP-dependent ribosomal translocation step during translation elongation. During this step, the ribosome changes from the pre-translocational (PRE) to the post-translocational (POST) state as the newly formed A-site-bound peptidyl-tRNA and P-site-bound deacylated tRNA move to the P and E sites, respectively. Catalyzes the coordinated movement of the two tRNA molecules, the mRNA and conformational changes in the ribosome. The sequence is that of Elongation factor G from Blochmanniella pennsylvanica (strain BPEN).